We begin with the raw amino-acid sequence, 308 residues long: Tryptophan 2,3-dioxygenase (308 aa).

The interval 1–37 (MKPPGDNAPAGCPFSGARAAQPAHEAPHVPGDAAGET) is disordered. Substrate is bound by residues 77–81 (FIIQH), tyrosine 139, and arginine 143. Histidine 266 serves as a coordination point for heme. Residue threonine 280 participates in substrate binding.

This sequence belongs to the tryptophan 2,3-dioxygenase family. As to quaternary structure, homotetramer. It depends on heme as a cofactor.

The enzyme catalyses L-tryptophan + O2 = N-formyl-L-kynurenine. The protein operates within amino-acid degradation; L-tryptophan degradation via kynurenine pathway; L-kynurenine from L-tryptophan: step 1/2. In terms of biological role, heme-dependent dioxygenase that catalyzes the oxidative cleavage of the L-tryptophan (L-Trp) pyrrole ring and converts L-tryptophan to N-formyl-L-kynurenine. Catalyzes the oxidative cleavage of the indole moiety. This Burkholderia ambifaria (strain MC40-6) protein is Tryptophan 2,3-dioxygenase.